Consider the following 62-residue polypeptide: Large ribosomal subunit protein bL28 (62 aa).

The protein belongs to the bacterial ribosomal protein bL28 family.

The protein is Large ribosomal subunit protein bL28 of Helicobacter pylori (strain Shi470).